The following is a 489-amino-acid chain: GTPase Der (489 aa).

2 consecutive EngA-type G domains span residues 3–166 (PVVA…FDDV) and 201–374 (IKLA…DSST). GTP is bound by residues 9 to 16 (GRPNVGKS), 56 to 60 (DTGGI), 118 to 121 (NKTD), 207 to 214 (GRPNVGKS), 254 to 258 (DTAGV), and 319 to 322 (NKWD). In terms of domain architecture, KH-like spans 375–459 (KRISTSILTR…PIRIEFREGT (85 aa)).

Belongs to the TRAFAC class TrmE-Era-EngA-EngB-Septin-like GTPase superfamily. EngA (Der) GTPase family. As to quaternary structure, associates with the 50S ribosomal subunit.

Its function is as follows. GTPase that plays an essential role in the late steps of ribosome biogenesis. The polypeptide is GTPase Der (Psychromonas ingrahamii (strain DSM 17664 / CCUG 51855 / 37)).